A 123-amino-acid polypeptide reads, in one-letter code: PTS-dependent dihydroxyacetone kinase, phosphotransferase subunit DhaM (123 aa).

In terms of domain architecture, PTS EIIA type-4 spans 2–123; that stretch reads TYGIVIVSHS…EQLEKMLIEK (122 aa). Residue His10 is the Tele-phosphohistidine intermediate; for EIIA activity of the active site.

Homodimer. The dihydroxyacetone kinase complex is composed of a homodimer of DhaM, a homodimer of DhaK and the subunit DhaL.

The enzyme catalyses dihydroxyacetone + phosphoenolpyruvate = dihydroxyacetone phosphate + pyruvate. Its pathway is polyol metabolism; glycerol degradation. Component of the dihydroxyacetone kinase complex, which is responsible for the phosphoenolpyruvate (PEP)-dependent phosphorylation of dihydroxyacetone. DhaM serves as the phosphoryl donor. Is phosphorylated by phosphoenolpyruvate in an EI- and HPr-dependent reaction, and a phosphorelay system on histidine residues finally leads to phosphoryl transfer to DhaL and dihydroxyacetone. The polypeptide is PTS-dependent dihydroxyacetone kinase, phosphotransferase subunit DhaM (Lactococcus lactis subsp. lactis (strain IL1403) (Streptococcus lactis)).